We begin with the raw amino-acid sequence, 481 residues long: ATP synthase subunit beta, chloroplastic (481 aa).

Position 161-168 (161-168) interacts with ATP; sequence GGAGVGKT.

The protein belongs to the ATPase alpha/beta chains family. F-type ATPases have 2 components, CF(1) - the catalytic core - and CF(0) - the membrane proton channel. CF(1) has five subunits: alpha(3), beta(3), gamma(1), delta(1), epsilon(1). CF(0) has four main subunits: a(1), b(1), b'(1) and c(9-12).

It localises to the plastid. Its subcellular location is the chloroplast thylakoid membrane. It carries out the reaction ATP + H2O + 4 H(+)(in) = ADP + phosphate + 5 H(+)(out). Produces ATP from ADP in the presence of a proton gradient across the membrane. The catalytic sites are hosted primarily by the beta subunits. The polypeptide is ATP synthase subunit beta, chloroplastic (Mesostigma viride (Green alga)).